A 244-amino-acid chain; its full sequence is 7-cyano-7-deazaguanine synthase (244 aa).

An ATP-binding site is contributed by 14-24; that stretch reads FSGGQDSATCV. Residues Cys202, Cys217, Cys220, and Cys223 each contribute to the Zn(2+) site.

Belongs to the QueC family. It depends on Zn(2+) as a cofactor.

It carries out the reaction 7-carboxy-7-deazaguanine + NH4(+) + ATP = 7-cyano-7-deazaguanine + ADP + phosphate + H2O + H(+). It participates in purine metabolism; 7-cyano-7-deazaguanine biosynthesis. Functionally, catalyzes the ATP-dependent conversion of 7-carboxy-7-deazaguanine (CDG) to 7-cyano-7-deazaguanine (preQ(0)). This chain is 7-cyano-7-deazaguanine synthase, found in Burkholderia multivorans (strain ATCC 17616 / 249).